The following is a 106-amino-acid chain: uncharacterized protein (106 aa).

Positions 1 to 25 (MSVIKKNIPAIGLCICAFFIHSAVG) are cleaved as a signal peptide.

The protein to the N-terminal of the FimA/PapA family of fimbria proteins.

This is an uncharacterized protein from Salmonella typhi.